The following is a 349-amino-acid chain: Adenosine deaminase (349 aa).

Residues histidine 25 and histidine 27 each contribute to the Zn(2+) site. Substrate contacts are provided by histidine 27, aspartate 29, and glycine 182. Residue histidine 209 coordinates Zn(2+). Glutamate 212 functions as the Proton donor in the catalytic mechanism. Residue aspartate 289 participates in Zn(2+) binding.

This sequence belongs to the metallo-dependent hydrolases superfamily. Adenosine and AMP deaminases family. Adenosine deaminase subfamily. The cofactor is Zn(2+).

It catalyses the reaction adenosine + H2O + H(+) = inosine + NH4(+). The enzyme catalyses 2'-deoxyadenosine + H2O + H(+) = 2'-deoxyinosine + NH4(+). In terms of biological role, catalyzes the hydrolytic deamination of adenosine and 2-deoxyadenosine. This chain is Adenosine deaminase, found in Streptococcus mutans serotype c (strain ATCC 700610 / UA159).